The sequence spans 237 residues: Phosphoribosylaminoimidazole-succinocarboxamide synthase (237 aa).

Belongs to the SAICAR synthetase family.

The catalysed reaction is 5-amino-1-(5-phospho-D-ribosyl)imidazole-4-carboxylate + L-aspartate + ATP = (2S)-2-[5-amino-1-(5-phospho-beta-D-ribosyl)imidazole-4-carboxamido]succinate + ADP + phosphate + 2 H(+). It participates in purine metabolism; IMP biosynthesis via de novo pathway; 5-amino-1-(5-phospho-D-ribosyl)imidazole-4-carboxamide from 5-amino-1-(5-phospho-D-ribosyl)imidazole-4-carboxylate: step 1/2. In Pectobacterium atrosepticum (strain SCRI 1043 / ATCC BAA-672) (Erwinia carotovora subsp. atroseptica), this protein is Phosphoribosylaminoimidazole-succinocarboxamide synthase.